Consider the following 1191-residue polypeptide: Puratrophin-1 (1191 aa).

Disordered stretches follow at residues 1–152 and 707–728; these read MERP…DPVG and AGGGALPQASPTVPPPGSSDPR. Ser64 is modified (phosphoserine). A compositionally biased stretch (polar residues) spans 111–120; it reads SHLSLAQGES. The region spanning 732–908 is the DH domain; it reads RLQLVLAEMV…HFQLRHGNDL (177 aa). One can recognise a PH domain in the interval 920–1027; that stretch reads NLKEQGQLVR…WTADISHLLW (108 aa). Residues 1150–1176 form a disordered region; it reads SLTAEDSEISSQCPSASGSSGSDSSCV. Residues 1159-1176 are compositionally biased toward low complexity; that stretch reads SSQCPSASGSSGSDSSCV.

Expressed in kidney, Leydig cells in the testis, epithelial cells in the prostate gland and Langerhans islet in the pancreas. Isoform 1 and isoform 3 are strongly expressed in Purkinje cells and to a lower extent in other neurons (at protein level). Widely expressed at low levels. More strongly expressed in testis and pancreas.

In terms of biological role, possible role in intracellular signaling and cytoskeleton dynamics at the Golgi. In Homo sapiens (Human), this protein is Puratrophin-1 (PLEKHG4).